Consider the following 424-residue polypeptide: Steryl acetyl hydrolase 1 (424 aa).

The residue at position 2 (Ala2) is an N-acetylalanine. Residues 2–45 (AANSGLDSKVEYYRLQENEIISAVSSEDADQNDAGFRLSTIHLH) lie on the Cytoplasmic side of the membrane. The helical; Signal-anchor for type II membrane protein transmembrane segment at 46 to 66 (LFHGLKFAALLFTVVPVFIIL) threads the bilayer. The Lumenal portion of the chain corresponds to 67–424 (DSMKIIFQRK…IARILEFMQS (358 aa)). N-linked (GlcNAc...) asparagine glycosylation occurs at Asn85. The short motif at 176 to 178 (HGG) is the Involved in the stabilization of the negatively charged intermediate by the formation of the oxyanion hole element. Residue Ser250 is part of the active site. Asn283 carries an N-linked (GlcNAc...) asparagine glycan. Residue His395 is part of the active site. N-linked (GlcNAc...) asparagine glycosylation occurs at Asn401.

This sequence belongs to the 'GDXG' lipolytic enzyme family.

It is found in the endoplasmic reticulum membrane. Its function is as follows. Required for the deacetylation of acetylated sterols. Involved in the resistance to eugenol and pregnenolone toxicity. This is Steryl acetyl hydrolase 1 (SAY1) from Saccharomyces cerevisiae (strain ATCC 204508 / S288c) (Baker's yeast).